A 439-amino-acid polypeptide reads, in one-letter code: Indole-3-pyruvate monooxygenase YUCCA4 (439 aa).

FAD is bound at residue glycine 49–glycine 54. NADP(+) is bound at residue glycine 226–glycine 231.

It belongs to the FMO family. It depends on FAD as a cofactor.

It carries out the reaction indole-3-pyruvate + NADPH + O2 + H(+) = (indol-3-yl)acetate + CO2 + NADP(+) + H2O. In terms of biological role, involved in auxin biosynthesis in anthers. This chain is Indole-3-pyruvate monooxygenase YUCCA4, found in Oryza sativa subsp. japonica (Rice).